We begin with the raw amino-acid sequence, 161 residues long: Urease accessory protein UreE (161 aa).

Belongs to the UreE family.

Its subcellular location is the cytoplasm. Functionally, involved in urease metallocenter assembly. Binds nickel. Probably functions as a nickel donor during metallocenter assembly. This chain is Urease accessory protein UreE, found in Arthrobacter sp. (strain FB24).